The sequence spans 249 residues: Proteasome subunit alpha (249 aa).

It belongs to the peptidase T1A family. The 20S proteasome core is composed of 14 alpha and 14 beta subunits that assemble into four stacked heptameric rings, resulting in a barrel-shaped structure. The two inner rings, each composed of seven catalytic beta subunits, are sandwiched by two outer rings, each composed of seven alpha subunits. The catalytic chamber with the active sites is on the inside of the barrel. Has a gated structure, the ends of the cylinder being occluded by the N-termini of the alpha-subunits. Is capped at one or both ends by the proteasome regulatory ATPase, PAN.

The protein resides in the cytoplasm. With respect to regulation, the formation of the proteasomal ATPase PAN-20S proteasome complex, via the docking of the C-termini of PAN into the intersubunit pockets in the alpha-rings, triggers opening of the gate for substrate entry. Interconversion between the open-gate and close-gate conformations leads to a dynamic regulation of the 20S proteasome proteolysis activity. Its function is as follows. Component of the proteasome core, a large protease complex with broad specificity involved in protein degradation. The polypeptide is Proteasome subunit alpha (Methanosarcina barkeri (strain Fusaro / DSM 804)).